The chain runs to 411 residues: Receptor GIN3 (411 aa).

The Extracellular portion of the chain corresponds to 1-99 (MSGFVAGEEA…LLPILPHPRN (99 aa)). A helical transmembrane segment spans residues 100-120 (IPIIVPLFCVFTVMTSLAVGL). The Cytoplasmic portion of the chain corresponds to 121–134 (RLWSRQKVAGGIRS). A helical transmembrane segment spans residues 135–155 (FDWLALAGFGLTIIYGAVSVY). The Extracellular segment spans residues 156–181 (HSKVSGPYQAFYDRTWDQMKENYKVY). The chain crosses the membrane as a helical span at residues 182–202 (LVLTIMYPFIMGLIKISLLLF). The Cytoplasmic segment spans residues 203 to 227 (YYRVATLNYVQWAVYATGSLTIANS). Residues 228–248 (IAAIITHCLAFMPIDFWNHFL) traverse the membrane as a helical segment. At 249–262 (QSPFKFNSRTPMLV) the chain is on the extracellular side. The helical transmembrane segment at 263–283 (FGAVYILTDVAILIIPMPMVF) threads the bilayer. Residues 284–292 (QLKLYPREK) are Cytoplasmic-facing. The chain crosses the membrane as a helical span at residues 293 to 313 (VIAVIAFSLGGVACVASGFRI). The Extracellular portion of the chain corresponds to 314 to 328 (WAIDEFQNYSGKNSS). 2 N-linked (GlcNAc...) asparagine glycosylation sites follow: Asn321 and Asn326. The chain crosses the membrane as a helical span at residues 329–349 (GLMIDAWTMIELNLTLICASA). Residues 350–411 (PAIRALAIHY…QSPVIPKEVV (62 aa)) lie on the Cytoplasmic side of the membrane. Positions 371–411 (FSSSGATRGSKSAGSSGKSKTPESEKSMQVSQSPVIPKEVV) are disordered. The segment covering 372 to 389 (SSSGATRGSKSAGSSGKS) has biased composition (low complexity).

It belongs to the SAT4 family. Interacts with guanine nucleotide-binding protein alpha GPA2; to activate adenylate cyclase and positively regulate nematode trap formation.

The protein resides in the cell membrane. Its function is as follows. Receptor that senses nematode-derived signals at the cell surface and signals via adenylate cyclase to positively regulate trap formation for nematode capture. In Arthrobotrys oligospora (strain ATCC 24927 / CBS 115.81 / DSM 1491) (Nematode-trapping fungus), this protein is Receptor GIN3.